The chain runs to 263 residues: MPLPVALQTRLAKRGILKHLEPEPEEEIIAEDYDDDPVDYEATRLEGLPPSWYKVFDPSCGLPYYWNVDTDLVSWLSPHDPNSVVTKSAKKLRSSNADAEEKLDRSHEKSDRGHEKSDRGHEKSDRSHEKSERNHEKSDRDRERGYDKVDRERERDRDRDRGYDKVDREESKERRHHRREELAPYPKSKKAASRKDEELDPMDPSSYSDAPRGTWSTGLPKRNEAKTGADTTAAGPLFQQRPYPSPGAVLRANAEASRTKQQD.

A WW domain is found at Glu46–Asp80. Ser94 carries the phosphoserine modification. The segment at Ser94–Asp263 is disordered. Positions Ala99–Glu173 are enriched in basic and acidic residues. Repeat copies occupy residues Asp104–Ser110, Asp111–Ser117, Asp118–Ser124, Asp125–Ser131, Glu132–Ser138, Asp139–Arg140, Asp141–Arg142, Glu143–Arg144, Asp150–Arg151, Glu152–Arg153, Glu154–Arg155, Asp156–Arg157, Asp158–Arg159, and Asp160–Arg161. Residues Asp104 to Ser138 form a 5 X 7 AA approximate tandem repeats of D-R-[SG]-H-D-K-S region. The interval Asp139 to Arg144 is 3 X 2 AA tandem repeats of [DE]-R. Residues Asp150–Arg161 are 6 X 2 AA tandem repeats of [DE]-R. Residues Tyr243–Asn253 are important for interaction with TXNL4A. Ser245 bears the Phosphoserine mark.

As to quaternary structure, interacts with POU3F2/Brn-2, ATXN1, TXNL4A, HTT and AR. Interaction with ATXN1 correlates positively with the length of the polyglutamine tract. Interacts with RNA polymerase II large subunit in a phosphorylation-dependent manner. Forms a ternary complex with ATXN1 mutant and phosphorylated RNA polymerase II. Interacts (via C-terminus) with TXNL4A and CD2BP2. Interacts (via WW domain) with ATN1 and SF3B1, and may interact with additional splice factors. Interacts (via WW domain) with WBP11; Leading to reduce interaction between PQBP1 and TXNL4A. Interacts with CAPRIN1. Interacts with DDX1. Interacts with SFPQ. Interacts with KHSRP.

The protein resides in the nucleus. The protein localises to the nucleus speckle. Its subcellular location is the cytoplasmic granule. Functionally, intrinsically disordered protein that acts as a scaffold, and which is involved in different processes, such as pre-mRNA splicing, transcription regulation, innate immunity and neuron development. Interacts with splicing-related factors via the intrinsically disordered region and regulates alternative splicing of target pre-mRNA species. May suppress the ability of POU3F2 to transactivate the DRD1 gene in a POU3F2 dependent manner. Can activate transcription directly or via association with the transcription machinery. May be involved in ATXN1 mutant-induced cell death. The interaction with ATXN1 mutant reduces levels of phosphorylated RNA polymerase II large subunit. Involved in the assembly of cytoplasmic stress granule, possibly by participating in the transport of neuronal RNA granules. Also acts as an innate immune sensor of infection by retroviruses, by detecting the presence of reverse-transcribed DNA in the cytosol. Directly binds retroviral reverse-transcribed DNA in the cytosol and interacts with CGAS, leading to activate the cGAS-STING signaling pathway, triggering type-I interferon production. This Bos taurus (Bovine) protein is Polyglutamine-binding protein 1 (PQBP1).